The primary structure comprises 208 residues: V-type ATP synthase subunit E (208 aa).

It belongs to the V-ATPase E subunit family.

Functionally, produces ATP from ADP in the presence of a proton gradient across the membrane. The chain is V-type ATP synthase subunit E (atpE) from Chlamydia muridarum (strain MoPn / Nigg).